Here is a 508-residue protein sequence, read N- to C-terminus: E3 ubiquitin-protein ligase XBAT32 (508 aa).

ANK repeat units lie at residues 50–79 (VRNS…DINL), 83–112 (RGQT…NIHR), 117–147 (NGGT…SVPN), 177–206 (GGIT…SVTQ), and 220–249 (AGST…CLAA). The segment at 321–372 (CAVCLERKCTVAADGCAHEFCTNCALYLSTTSITSSKTSNVTPGSVPCPLCR) adopts an RING-type zinc-finger fold.

Interacts with ACS4 and ACS7. Expressed in the vascular system of primary root, vascular tissue of leaves, stems and anthers.

It carries out the reaction S-ubiquitinyl-[E2 ubiquitin-conjugating enzyme]-L-cysteine + [acceptor protein]-L-lysine = [E2 ubiquitin-conjugating enzyme]-L-cysteine + N(6)-ubiquitinyl-[acceptor protein]-L-lysine.. The protein operates within protein modification; protein ubiquitination. Functionally, E3 ubiquitin-protein ligase that mediates ubiquitination of ACC synthases (ACS). Negatively regulates ethylene biosynthesis probably via ubiquitin-dependent degradation of ACS4 and ACS7 enzymes. Regulates lateral root formation and development by controlling ethylene production which inhibits lateral root formation at high concentration. This chain is E3 ubiquitin-protein ligase XBAT32 (XBAT32), found in Arabidopsis thaliana (Mouse-ear cress).